A 176-amino-acid chain; its full sequence is UPF0262 protein GbCGDNIH1_1393 (176 aa).

It belongs to the UPF0262 family.

The chain is UPF0262 protein GbCGDNIH1_1393 from Granulibacter bethesdensis (strain ATCC BAA-1260 / CGDNIH1).